Consider the following 89-residue polypeptide: Protein FAM25A (89 aa).

The protein belongs to the FAM25 family.

The protein is Protein FAM25A of Homo sapiens (Human).